Reading from the N-terminus, the 163-residue chain is Probable metallophosphoesterase MG207 (163 aa).

D9, H11, D34, N53, H75, H107, and H109 together coordinate Mn(2+).

This sequence belongs to the metallophosphoesterase superfamily. YfcE family. The cofactor is Mn(2+).

In Mycoplasma genitalium (strain ATCC 33530 / DSM 19775 / NCTC 10195 / G37) (Mycoplasmoides genitalium), this protein is Probable metallophosphoesterase MG207.